A 146-amino-acid chain; its full sequence is Mite group 2 allergen Der p 2 (146 aa).

The first 17 residues, 1-17 (MMYKILCLSLLVAAVAR), serve as a signal peptide directing secretion. 3 cysteine pairs are disulfide-bonded: C25/C136, C38/C44, and C90/C95.

Belongs to the NPC2 family.

Its subcellular location is the secreted. This is Mite group 2 allergen Der p 2 (DERP2) from Dermatophagoides pteronyssinus (European house dust mite).